The sequence spans 111 residues: UPF0145 protein Bphy_3680 (111 aa).

This sequence belongs to the UPF0145 family.

This chain is UPF0145 protein Bphy_3680, found in Paraburkholderia phymatum (strain DSM 17167 / CIP 108236 / LMG 21445 / STM815) (Burkholderia phymatum).